The sequence spans 268 residues: TATA-box-binding protein (268 aa).

Residues 1–24 (MDSLTTHPATAQQARAFTSPSSLS) show a composition bias toward polar residues. The segment at 1–86 (MDSLTTHPAT…TPAATPGASA (86 aa)) is disordered. Residues 50–86 (NGQSANGNVNGQQQGANAANGNGVMPATPAATPGASA) are compositionally biased toward low complexity. Repeat copies occupy residues 95–171 (LQNI…ARII) and 185–262 (IQNI…YPVL).

It belongs to the TBP family. In terms of assembly, belongs to the TFIID complex together with the TBP-associated factors (TAFs). Binds DNA as monomer.

It is found in the nucleus. Functionally, general transcription factor that functions at the core of the DNA-binding multiprotein factor TFIID. Binding of TFIID to the TATA box is the initial transcriptional step of the pre-initiation complex (PIC), playing a role in the activation of eukaryotic genes transcribed by RNA polymerase II. The chain is TATA-box-binding protein (tbpA) from Emericella nidulans (strain FGSC A4 / ATCC 38163 / CBS 112.46 / NRRL 194 / M139) (Aspergillus nidulans).